Reading from the N-terminus, the 395-residue chain is General transcription factor IIH subunit 2 (395 aa).

A VWFA domain is found at 60-236; it reads HLYVVVDGSR…HYKELLTHHV (177 aa). Tyr-95 bears the Phosphotyrosine mark. A C4-type zinc finger spans residues 291–308; it reads CPQCRAKYCELPVECKIC.

This sequence belongs to the GTF2H2 family. As to quaternary structure, component of the TFIID-containing RNA polymerase II pre-initiation complex that is composed of TBP and at least GTF2A1, GTF2A2, GTF2E1, GTF2E2, GTF2F1, GTF2H2, GTF2H3, GTF2H4, GTF2H5, GTF2B, TCEA1, ERCC2 and ERCC3. Component of the 7-subunit TFIIH core complex composed of XPB/ERCC3, XPD/ERCC2, GTF2H1, GTF2H2, GTF2H3, GTF2H4 and GTF2H5, which is active in NER. The core complex associates with the 3-subunit CDK-activating kinase (CAK) module composed of CCNH/cyclin H, CDK7 and MNAT1 to form the 10-subunit holoenzyme (holo-TFIIH) active in transcription. Interacts with XPB, XPD, GTF2H1 and GTF2H3. (Microbial infection) Interacts with varicella-zoster virus IE63 protein. As to expression, widely expressed, with higher expression in skeletal muscle.

Its subcellular location is the nucleus. Component of the general transcription and DNA repair factor IIH (TFIIH) core complex, which is involved in general and transcription-coupled nucleotide excision repair (NER) of damaged DNA and, when complexed to CAK, in RNA transcription by RNA polymerase II. In NER, TFIIH acts by opening DNA around the lesion to allow the excision of the damaged oligonucleotide and its replacement by a new DNA fragment. In transcription, TFIIH has an essential role in transcription initiation. When the pre-initiation complex (PIC) has been established, TFIIH is required for promoter opening and promoter escape. Phosphorylation of the C-terminal tail (CTD) of the largest subunit of RNA polymerase II by the kinase module CAK controls the initiation of transcription. The N-terminus of GTF2H2 interacts with and regulates XPD whereas an intact C-terminus is required for a successful escape of RNAP II form the promoter. The protein is General transcription factor IIH subunit 2 (GTF2H2) of Homo sapiens (Human).